The following is a 512-amino-acid chain: Cytochrome P450 4d1 (512 aa).

Residues Glu-316 and Cys-456 each coordinate heme.

It belongs to the cytochrome P450 family. It depends on heme as a cofactor.

It is found in the endoplasmic reticulum membrane. The protein resides in the microsome membrane. Its function is as follows. Involved in the metabolism of insect hormones and in the breakdown of synthetic insecticides. In Drosophila melanogaster (Fruit fly), this protein is Cytochrome P450 4d1 (Cyp4d1).